The primary structure comprises 441 residues: Ribulose bisphosphate carboxylase large chain (441 aa).

2 residues coordinate substrate: asparagine 89 and threonine 139. Lysine 141 serves as the catalytic Proton acceptor. Residue lysine 143 coordinates substrate. Positions 167, 169, and 170 each coordinate Mg(2+). Lysine 167 is subject to N6-carboxylysine. Catalysis depends on histidine 260, which acts as the Proton acceptor. Residue 261, histidine 293, and serine 345 together coordinate substrate.

The protein belongs to the RuBisCO large chain family. Type I subfamily. As to quaternary structure, heterohexadecamer of 8 large chains and 8 small chains; disulfide-linked. The disulfide link is formed within the large subunit homodimers. It depends on Mg(2+) as a cofactor. The disulfide bond which can form in the large chain dimeric partners within the hexadecamer appears to be associated with oxidative stress and protein turnover.

The protein localises to the plastid. Its subcellular location is the chloroplast. It catalyses the reaction 2 (2R)-3-phosphoglycerate + 2 H(+) = D-ribulose 1,5-bisphosphate + CO2 + H2O. It carries out the reaction D-ribulose 1,5-bisphosphate + O2 = 2-phosphoglycolate + (2R)-3-phosphoglycerate + 2 H(+). RuBisCO catalyzes two reactions: the carboxylation of D-ribulose 1,5-bisphosphate, the primary event in carbon dioxide fixation, as well as the oxidative fragmentation of the pentose substrate in the photorespiration process. Both reactions occur simultaneously and in competition at the same active site. The chain is Ribulose bisphosphate carboxylase large chain from Apocynum cannabinum (Hemp dogbane).